Consider the following 72-residue polypeptide: UPF0352 protein NTHI1007 (72 aa).

This sequence belongs to the UPF0352 family.

This is UPF0352 protein NTHI1007 from Haemophilus influenzae (strain 86-028NP).